Here is a 457-residue protein sequence, read N- to C-terminus: Phosphoglucosamine mutase (457 aa).

S105 (phosphoserine intermediate) is an active-site residue. 4 residues coordinate Mg(2+): S105, D247, D249, and D251. Position 105 is a phosphoserine (S105).

It belongs to the phosphohexose mutase family. Mg(2+) serves as cofactor. In terms of processing, activated by phosphorylation.

The catalysed reaction is alpha-D-glucosamine 1-phosphate = D-glucosamine 6-phosphate. Its function is as follows. Catalyzes the conversion of glucosamine-6-phosphate to glucosamine-1-phosphate. The sequence is that of Phosphoglucosamine mutase from Protochlamydia amoebophila (strain UWE25).